Reading from the N-terminus, the 62-residue chain is MAVPKRKTSKTRRDKRRASSYKLPRVTITTCPNCGSPKLPHRVCKECGHYDGKQVVDNSEQN.

A compositionally biased stretch (basic residues) spans 1 to 19 (MAVPKRKTSKTRRDKRRAS). The disordered stretch occupies residues 1 to 20 (MAVPKRKTSKTRRDKRRASS).

The protein belongs to the bacterial ribosomal protein bL32 family.

This Finegoldia magna (strain ATCC 29328 / DSM 20472 / WAL 2508) (Peptostreptococcus magnus) protein is Large ribosomal subunit protein bL32.